A 446-amino-acid chain; its full sequence is N-succinylarginine dihydrolase (446 aa).

Substrate-binding positions include 19-28, asparagine 110, and 137-138; these read AGLSFGNVAS and HR. Glutamate 174 is an active-site residue. Arginine 213 provides a ligand contact to substrate. Residue histidine 249 is part of the active site. Aspartate 251 and asparagine 364 together coordinate substrate. The Nucleophile role is filled by cysteine 370.

The protein belongs to the succinylarginine dihydrolase family. As to quaternary structure, homodimer.

It carries out the reaction N(2)-succinyl-L-arginine + 2 H2O + 2 H(+) = N(2)-succinyl-L-ornithine + 2 NH4(+) + CO2. It participates in amino-acid degradation; L-arginine degradation via AST pathway; L-glutamate and succinate from L-arginine: step 2/5. In terms of biological role, catalyzes the hydrolysis of N(2)-succinylarginine into N(2)-succinylornithine, ammonia and CO(2). The chain is N-succinylarginine dihydrolase from Burkholderia multivorans (strain ATCC 17616 / 249).